We begin with the raw amino-acid sequence, 232 residues long: Phosphatidylserine decarboxylase proenzyme (232 aa).

S190 (schiff-base intermediate with substrate; via pyruvic acid) is an active-site residue. S190 is subject to Pyruvic acid (Ser); by autocatalysis.

It belongs to the phosphatidylserine decarboxylase family. PSD-A subfamily. Heterodimer of a large membrane-associated beta subunit and a small pyruvoyl-containing alpha subunit. Pyruvate serves as cofactor. Is synthesized initially as an inactive proenzyme. Formation of the active enzyme involves a self-maturation process in which the active site pyruvoyl group is generated from an internal serine residue via an autocatalytic post-translational modification. Two non-identical subunits are generated from the proenzyme in this reaction, and the pyruvate is formed at the N-terminus of the alpha chain, which is derived from the carboxyl end of the proenzyme. The post-translation cleavage follows an unusual pathway, termed non-hydrolytic serinolysis, in which the side chain hydroxyl group of the serine supplies its oxygen atom to form the C-terminus of the beta chain, while the remainder of the serine residue undergoes an oxidative deamination to produce ammonia and the pyruvoyl prosthetic group on the alpha chain.

It is found in the cell membrane. It catalyses the reaction a 1,2-diacyl-sn-glycero-3-phospho-L-serine + H(+) = a 1,2-diacyl-sn-glycero-3-phosphoethanolamine + CO2. It participates in phospholipid metabolism; phosphatidylethanolamine biosynthesis; phosphatidylethanolamine from CDP-diacylglycerol: step 2/2. Catalyzes the formation of phosphatidylethanolamine (PtdEtn) from phosphatidylserine (PtdSer). The polypeptide is Phosphatidylserine decarboxylase proenzyme (Rhizobium etli (strain ATCC 51251 / DSM 11541 / JCM 21823 / NBRC 15573 / CFN 42)).